The sequence spans 476 residues: Rifampicin monooxygenase (476 aa).

Positions 12, 31, 32, 98, 122, and 156 each coordinate FAD. The rifampicin site is built by Arg196 and Arg213. The FAD site is built by Asp277, Leu290, and Asn291.

Belongs to the rifampicin monooxygenase family. Requires FAD as cofactor.

The catalysed reaction is rifampicin + NADPH + O2 = rifampicin para-naphthoquinone carboxamide + NADP(+) + H2O + H(+). It catalyses the reaction rifampicin + NADH + O2 = rifampicin para-naphthoquinone carboxamide + NAD(+) + H2O + H(+). The enzyme catalyses rifamycin SV + NADPH + O2 = rifamycin SV para-naphthoquinone carboxamide + NADP(+) + H2O. It carries out the reaction rifamycin SV + NADH + O2 = rifamycin SV para-naphthoquinone carboxamide + NAD(+) + H2O. Monooxygenase that can modify rifampicin, thereby inactivating its antibiotic activity. Inactivates a broad range of rifamycin antibiotics. This chain is Rifampicin monooxygenase, found in Streptomyces venezuelae (strain ATCC 10712 / CBS 650.69 / DSM 40230 / JCM 4526 / NBRC 13096 / PD 04745).